A 375-amino-acid polypeptide reads, in one-letter code: Chaperone protein DnaJ (375 aa).

Positions 5–69 (DYYEILGIDK…QKRAQYDQFG (65 aa)) constitute a J domain. The CR-type zinc finger occupies 131–213 (GKETDIEIPK…CGGSGTVQKN (83 aa)). Positions 144, 147, 161, 164, 187, 190, 201, and 204 each coordinate Zn(2+). CXXCXGXG motif repeat units lie at residues 144-151 (CDTCNGSG), 161-168 (CSHCHGSG), 187-194 (CNYCQGTG), and 201-208 (CNTCGGSG).

Belongs to the DnaJ family. In terms of assembly, homodimer. Zn(2+) serves as cofactor.

The protein resides in the cytoplasm. Functionally, participates actively in the response to hyperosmotic and heat shock by preventing the aggregation of stress-denatured proteins and by disaggregating proteins, also in an autonomous, DnaK-independent fashion. Unfolded proteins bind initially to DnaJ; upon interaction with the DnaJ-bound protein, DnaK hydrolyzes its bound ATP, resulting in the formation of a stable complex. GrpE releases ADP from DnaK; ATP binding to DnaK triggers the release of the substrate protein, thus completing the reaction cycle. Several rounds of ATP-dependent interactions between DnaJ, DnaK and GrpE are required for fully efficient folding. Also involved, together with DnaK and GrpE, in the DNA replication of plasmids through activation of initiation proteins. In Oceanobacillus iheyensis (strain DSM 14371 / CIP 107618 / JCM 11309 / KCTC 3954 / HTE831), this protein is Chaperone protein DnaJ.